We begin with the raw amino-acid sequence, 82 residues long: Exodeoxyribonuclease 7 small subunit (82 aa).

This sequence belongs to the XseB family. In terms of assembly, heterooligomer composed of large and small subunits.

The protein resides in the cytoplasm. The catalysed reaction is Exonucleolytic cleavage in either 5'- to 3'- or 3'- to 5'-direction to yield nucleoside 5'-phosphates.. Bidirectionally degrades single-stranded DNA into large acid-insoluble oligonucleotides, which are then degraded further into small acid-soluble oligonucleotides. The polypeptide is Exodeoxyribonuclease 7 small subunit (Colwellia psychrerythraea (strain 34H / ATCC BAA-681) (Vibrio psychroerythus)).